The primary structure comprises 319 residues: uncharacterized protein (319 aa).

In terms of domain architecture, SIS spans 36-178; that stretch reads IIEFLLSFKG…MTVIHEERGF (143 aa). Residue 51-56 coordinates ATP; sequence GIGKSG. 2 consecutive CBS domains span residues 203–263 and 268–319; these read MRSG…HLKT and MTKN…MGVS.

This sequence belongs to the SIS family. GutQ/KpsF subfamily.

This is an uncharacterized protein from Rickettsia prowazekii (strain Madrid E).